The following is a 139-amino-acid chain: Large-conductance mechanosensitive channel (139 aa).

The next 2 membrane-spanning stretches (helical) occupy residues 9-29 (AFAVKGNVVDMAVGIIIGAAF) and 79-99 (IQTVIDFVIVAFAIFMGVKAI).

It belongs to the MscL family. As to quaternary structure, homopentamer.

It localises to the cell inner membrane. In terms of biological role, channel that opens in response to stretch forces in the membrane lipid bilayer. May participate in the regulation of osmotic pressure changes within the cell. This Pseudomonas putida (strain ATCC 700007 / DSM 6899 / JCM 31910 / BCRC 17059 / LMG 24140 / F1) protein is Large-conductance mechanosensitive channel.